The following is a 140-amino-acid chain: MDCKSPKRANICPHLPGGGLFSTPPSQAAWRTLLTALCFPGPTCTGPMREGPRAVYNPPRAHRNSSDNCVMKHLLCAGDKNGTRRHALPSPLEGSFQPGRQIPPPQTPSTDPQTLPLSFRSLLRCHQLCAASLPPSLKLP.

Positions 80-115 are disordered; that stretch reads KNGTRRHALPSPLEGSFQPGRQIPPPQTPSTDPQTL.

This is an uncharacterized protein from Homo sapiens (Human).